The sequence spans 228 residues: Large ribosomal subunit protein uL4 (228 aa).

Disordered regions lie at residues 45 to 102 (GRQG…SQRT) and 208 to 228 (PAKG…EANQ). The span at 208–221 (PAKGKTAKAAATSG) shows a compositional bias: low complexity.

It belongs to the universal ribosomal protein uL4 family. Part of the 50S ribosomal subunit.

Functionally, one of the primary rRNA binding proteins, this protein initially binds near the 5'-end of the 23S rRNA. It is important during the early stages of 50S assembly. It makes multiple contacts with different domains of the 23S rRNA in the assembled 50S subunit and ribosome. Forms part of the polypeptide exit tunnel. This is Large ribosomal subunit protein uL4 from Saccharopolyspora erythraea (strain ATCC 11635 / DSM 40517 / JCM 4748 / NBRC 13426 / NCIMB 8594 / NRRL 2338).